We begin with the raw amino-acid sequence, 416 residues long: Pentraxin fusion protein (416 aa).

The first 14 residues, 1-14, serve as a signal peptide directing secretion; that stretch reads MKSLLLFLKSQVFG. Residue Asn-129 is glycosylated (N-linked (GlcNAc...) asparagine). Positions 184 to 206 are disordered; sequence GTEASDSSESVDGTEAPASPESD. One can recognise a Pentraxin (PTX) domain in the interval 220–416; that stretch reads TNKSFMFPKE…YSMIGNVAEV (197 aa). N-linked (GlcNAc...) asparagine glycosylation is present at Asn-221. The cysteines at positions 251 and 311 are disulfide-linked. Asp-275, Gln-353, Asp-354, and Gln-364 together coordinate Ca(2+).

Ca(2+) is required as a cofactor.

This is Pentraxin fusion protein (pxn1) from Xenopus laevis (African clawed frog).